Here is a 158-residue protein sequence, read N- to C-terminus: Transcription elongation factor GreB (158 aa).

The protein belongs to the GreA/GreB family. GreB subfamily.

Its function is as follows. Necessary for efficient RNA polymerase transcription elongation past template-encoded arresting sites. The arresting sites in DNA have the property of trapping a certain fraction of elongating RNA polymerases that pass through, resulting in locked ternary complexes. Cleavage of the nascent transcript by cleavage factors such as GreA or GreB allows the resumption of elongation from the new 3'terminus. GreB releases sequences of up to 9 nucleotides in length. This is Transcription elongation factor GreB from Escherichia coli (strain K12).